The sequence spans 333 residues: Cell shape-determining protein Mbl (333 aa).

Residues 12–14 (TAN), 156–158 (GGT), 204–207 (EDIK), and 284–287 (GGAL) contribute to the ATP site.

It belongs to the FtsA/MreB family. In terms of assembly, forms polymers. Forms a complex with MreB and MreBH. Interacts with MreC.

The protein resides in the cytoplasm. Forms membrane-associated dynamic filaments that are essential for cell shape determination. Acts by regulating cell wall synthesis and cell elongation, and thus cell shape. A feedback loop between cell geometry and Mbl localization may maintain elongated cell shape by targeting cell wall growth to regions of negative cell wall curvature. Filaments rotate around the cell circumference in concert with the cell wall synthesis enzymes. The process is driven by the cell wall synthesis machinery and does not depend on Mbl polymerization. Organizes peptidoglycan synthesis in the lateral cell wall. Also required for proper chromosome segregation. This chain is Cell shape-determining protein Mbl (mbl), found in Bacillus subtilis (strain 168).